The chain runs to 943 residues: Lysine-specific demethylase JMJ21 (943 aa).

The F-box domain maps to 14 to 60 (LGSLSVLPDETICVLLEYLAPRDIAHLACVSSVMYILCNEEPLWMSL). The 164-residue stretch at 216 to 379 (EAAPELLKDY…FVCLDMAPGY (164 aa)) folds into the JmjC domain. Fe cation-binding residues include histidine 262, aspartate 264, and histidine 347. The span at 396–410 (NSEDLEEETHDEEDN) shows a compositional bias: acidic residues. The interval 396-438 (NSEDLEEETHDEEDNTLSYSDLTRKEKRTRMNGGGETENREED) is disordered.

The protein belongs to the JARID1 histone demethylase family. It depends on Fe(2+) as a cofactor. Mostly expressed in leaves, and, to a lower extent, in inflorescences, roots, siliques and stems.

It is found in the nucleus. Functionally, may function as histone H3 lysine demethylase and be involved in regulation of gene expression. This Arabidopsis thaliana (Mouse-ear cress) protein is Lysine-specific demethylase JMJ21.